The primary structure comprises 121 residues: uncharacterized protein (121 aa).

This is an uncharacterized protein from Saccharomyces cerevisiae (strain ATCC 204508 / S288c) (Baker's yeast).